The chain runs to 396 residues: L-lactate dehydrogenase (396 aa).

The region spanning 1 to 380 is the FMN hydroxy acid dehydrogenase domain; the sequence is MIISAASDYR…TQDSLVQVLG (380 aa). Substrate is bound at residue Y24. The FMN site is built by S106 and Q127. Residue Y129 participates in substrate binding. T155 is a binding site for FMN. R164 is a binding site for substrate. FMN is bound at residue K251. H275 functions as the Proton acceptor in the catalytic mechanism. R278 lines the substrate pocket. 306–330 is a binding site for FMN; sequence DSGIRNGLDVVRMIALGADTVLLGR.

The protein belongs to the FMN-dependent alpha-hydroxy acid dehydrogenase family. The cofactor is FMN.

It localises to the cell inner membrane. It catalyses the reaction (S)-lactate + A = pyruvate + AH2. Functionally, catalyzes the conversion of L-lactate to pyruvate. Is coupled to the respiratory chain. The chain is L-lactate dehydrogenase from Escherichia coli O45:K1 (strain S88 / ExPEC).